A 430-amino-acid chain; its full sequence is Vitamin B6 salvage pathway transcriptional repressor PtsJ (430 aa).

Residues 4 to 72 (GKTANEIFDS…GRNGTVIKGS (69 aa)) form the HTH gntR-type domain. Positions 32 to 51 (VRELASELKVNRNTVAAAYK) form a DNA-binding region, H-T-H motif. Residues 70-95 (KGSPSPVALEGGDPHTPLHDLSGGNP) form a disordered region. Lys282 carries the post-translational modification N6-(pyridoxal phosphate)lysine.

In the C-terminal section; belongs to the class-I pyridoxal-phosphate-dependent aminotransferase family. In terms of assembly, homodimer in both apo- and holo-forms.

Its function is as follows. Acts as a transcriptional repressor of the pdxK gene, encoding a pyridoxal kinase involved in the vitamin B6 salvage pathway. Also represses transcription of its own gene. Binds to the ptsJ-pdxK intergenic region, but does not bind pdxY and pdxH promoters. Among all six B6 vitamers, only pyridoxal 5'-phosphate (PLP) clearly binds to the protein and acts as an effector molecule for PtsJ, inducing a protein conformational change that increases affinity for DNA. Thus, PLP stabilizes protein-DNA interactions, reinforcing repression. This Salmonella typhimurium (strain LT2 / SGSC1412 / ATCC 700720) protein is Vitamin B6 salvage pathway transcriptional repressor PtsJ.